A 73-amino-acid chain; its full sequence is uncharacterized protein (73 aa).

This is an uncharacterized protein from Treponema pallidum (strain Nichols).